The following is a 286-amino-acid chain: General stress protein A (286 aa).

Residues 12-17 (CADDNY) and 111-112 (DC) contribute to the UDP site. 3 residues coordinate Mn(2+): Asp-111, Asp-113, and His-247. 247–253 (HFCGGEK) is a UDP binding site.

The protein belongs to the glycosyltransferase 8 family.

This is General stress protein A (gspA) from Bacillus subtilis (strain 168).